A 656-amino-acid polypeptide reads, in one-letter code: Chaperone protein HtpG (656 aa).

The interval 1-364 (MSEQNPTDSK…SADLPLNVSR (364 aa)) is a; substrate-binding. Residues 365–583 (EILQESRDVK…EGELSPQMIQ (219 aa)) form a b region. The segment at 584–656 (MLKQMGQDVP…LRRVNELLMK (73 aa)) is c.

It belongs to the heat shock protein 90 family. Homodimer.

Its subcellular location is the cytoplasm. In terms of biological role, molecular chaperone. Has ATPase activity. This chain is Chaperone protein HtpG, found in Psychrobacter arcticus (strain DSM 17307 / VKM B-2377 / 273-4).